Reading from the N-terminus, the 446-residue chain is N-succinylarginine dihydrolase (446 aa).

Substrate contacts are provided by residues 19-28, Asn-110, and 137-138; these read AGLSFGNVAS and HR. Residue Glu-174 is part of the active site. Arg-213 is a binding site for substrate. His-249 is a catalytic residue. Substrate contacts are provided by Asp-251 and Asn-364. Cys-370 acts as the Nucleophile in catalysis.

This sequence belongs to the succinylarginine dihydrolase family. In terms of assembly, homodimer.

The enzyme catalyses N(2)-succinyl-L-arginine + 2 H2O + 2 H(+) = N(2)-succinyl-L-ornithine + 2 NH4(+) + CO2. Its pathway is amino-acid degradation; L-arginine degradation via AST pathway; L-glutamate and succinate from L-arginine: step 2/5. Functionally, catalyzes the hydrolysis of N(2)-succinylarginine into N(2)-succinylornithine, ammonia and CO(2). In Burkholderia ambifaria (strain ATCC BAA-244 / DSM 16087 / CCUG 44356 / LMG 19182 / AMMD) (Burkholderia cepacia (strain AMMD)), this protein is N-succinylarginine dihydrolase.